We begin with the raw amino-acid sequence, 781 residues long: Translation initiation factor IF-2 (781 aa).

The tract at residues 44 to 195 is disordered; that stretch reads RQLDNAVDGT…TPPKPKELPE (152 aa). Over residues 53 to 65 the composition is skewed to basic and acidic residues; sequence TNKKAEAPKKETT. Residues 66–81 are compositionally biased toward polar residues; it reads SNENGNSKGPNKPNMT. A compositionally biased stretch (low complexity) spans 82–93; sequence NSNEKSNKPNKP. The span at 115 to 126 shows a compositional bias: polar residues; it reads KPANTGNQTQAS. Over residues 127 to 169 the composition is skewed to low complexity; it reads GNQQAGGQKRNNNNNSNRPGGGNPNRPGGNNRPNRGGNFNNKG. Residues 282 to 451 form the tr-type G domain; sequence ERPPVVTIMG…LLVSEVEELK (170 aa). A G1 region spans residues 291-298; that stretch reads GHVDHGKT. Residue 291 to 298 participates in GTP binding; the sequence is GHVDHGKT. The interval 316–320 is G2; the sequence is GITQH. Residues 337 to 340 are G3; sequence DTPG. GTP is bound by residues 337-341 and 391-394; these read DTPGH and NKID. Residues 391-394 form a G4 region; the sequence is NKID. A G5 region spans residues 427–429; sequence SAK.

This sequence belongs to the TRAFAC class translation factor GTPase superfamily. Classic translation factor GTPase family. IF-2 subfamily.

Its subcellular location is the cytoplasm. Functionally, one of the essential components for the initiation of protein synthesis. Protects formylmethionyl-tRNA from spontaneous hydrolysis and promotes its binding to the 30S ribosomal subunits. Also involved in the hydrolysis of GTP during the formation of the 70S ribosomal complex. The chain is Translation initiation factor IF-2 from Listeria monocytogenes serotype 4a (strain HCC23).